The sequence spans 466 residues: MAFNTETFMLKNQAAIQLYEEVKRQPIFDYHCHLDPKDIFEDHIFDNIVDLWLGGDHYKWRLMRANGISEAEITGPASNLEKFKAFARTLERAYGNPVYHWSAMELKNVFGVNEILTESNAEEIYHRLNHFLKEHKISPRRLIADSKVMFIGTTDHPLDTLEWHKKLAADESFKTVVAPTFRPDEAFIEHRHFVDFITKLGDITQKEITDFSTFIAAMEERIAYFAQNGCRASDISFTEIVFEQTDELELNDLFNKVCEGYIPNQSEISKWQTAVFMELCRLYKKYGFVTQVHFGALRNNHSTIFEKLGADVGVDSLGDQVALTVNMNRLLDSLVKKDSLPKMIWYNLNPAYNIAVANTLANFQANELGVRSYLQFGAGWWFADTKLGMISQMNALAEQGMLANFIGMLTDSRSFLSYQRHDYFRRILCTYLGEWIEEGEVPEDYQALGSMAKDIAYQNAVNYFKN.

Belongs to the metallo-dependent hydrolases superfamily. Uronate isomerase family.

The enzyme catalyses D-glucuronate = D-fructuronate. The catalysed reaction is aldehydo-D-galacturonate = keto-D-tagaturonate. It functions in the pathway carbohydrate metabolism; pentose and glucuronate interconversion. This chain is Uronate isomerase, found in Streptococcus agalactiae serotype V (strain ATCC BAA-611 / 2603 V/R).